Here is an 845-residue protein sequence, read N- to C-terminus: Probable inorganic carbon transporter subunit DabA (845 aa).

The tract at residues 1–20 (MPMASGDESMSARSENPVQS) is disordered. Residues cysteine 345, aspartate 347, histidine 516, and cysteine 531 each coordinate Zn(2+).

This sequence belongs to the inorganic carbon transporter (TC 9.A.2) DabA family. Forms a complex with DabB. Zn(2+) serves as cofactor.

It localises to the cell inner membrane. In terms of biological role, part of an energy-coupled inorganic carbon pump. The sequence is that of Probable inorganic carbon transporter subunit DabA from Azotobacter vinelandii (strain DJ / ATCC BAA-1303).